The primary structure comprises 197 residues: MSYTVRDHYFHKAKKEHYLARAVYKLQEIQDRYKILKPGNRVLDLGAAPGSWMQFAREIVGPSGLVVGVDLKGVEHRFPEGVVVLQGDVTDPELARSLSVEHGPFDVVLSDMAPSTSGIRVADSARSALLFESALEMARSALRPGGHFVAKLFQGAEFHVLLQAVKRDFEWVKVTKPDASRKQSKEIYVIGMRLRKS.

The S-adenosyl-L-methionine site is built by Gly50, Trp52, Asp70, Asp88, and Asp111. The active-site Proton acceptor is the Lys151.

The protein belongs to the class I-like SAM-binding methyltransferase superfamily. RNA methyltransferase RlmE family.

It localises to the cytoplasm. It catalyses the reaction uridine(2552) in 23S rRNA + S-adenosyl-L-methionine = 2'-O-methyluridine(2552) in 23S rRNA + S-adenosyl-L-homocysteine + H(+). In terms of biological role, specifically methylates the uridine in position 2552 of 23S rRNA at the 2'-O position of the ribose in the fully assembled 50S ribosomal subunit. The polypeptide is Ribosomal RNA large subunit methyltransferase E (Syntrophobacter fumaroxidans (strain DSM 10017 / MPOB)).